Consider the following 190-residue polypeptide: Elongation factor P-like protein (190 aa).

The protein belongs to the elongation factor P family.

This chain is Elongation factor P-like protein, found in Serratia proteamaculans (strain 568).